The primary structure comprises 303 residues: UDP-N-acetylenolpyruvoylglucosamine reductase (303 aa).

Residues 32–212 enclose the FAD-binding PCMH-type domain; the sequence is IGGKADLFLN…EQETKEYLAK (181 aa). The active site involves Arg176. Catalysis depends on Ser226, which acts as the Proton donor. The active site involves Glu296.

It belongs to the MurB family. Requires FAD as cofactor.

The protein localises to the cytoplasm. The catalysed reaction is UDP-N-acetyl-alpha-D-muramate + NADP(+) = UDP-N-acetyl-3-O-(1-carboxyvinyl)-alpha-D-glucosamine + NADPH + H(+). Its pathway is cell wall biogenesis; peptidoglycan biosynthesis. Cell wall formation. The sequence is that of UDP-N-acetylenolpyruvoylglucosamine reductase from Desulforamulus reducens (strain ATCC BAA-1160 / DSM 100696 / MI-1) (Desulfotomaculum reducens).